The chain runs to 278 residues: Adenosylcobinamide-GDP ribazoletransferase (278 aa).

7 helical membrane passes run 31-51 (AMALAPFVGLALGLLAGSAVF), 66-86 (TLLPAVVGVTVLALVTRGLHL), 115-135 (TIGAFGAIIVLFVVLLQVGAL), 148-168 (ILVAAMTSRLAATLACTGAVP), 187-207 (DAALSFLAVCAVAALAGLLDF), 215-237 (ALRAVLAVWVGTGVSFLLRRYLL), and 247-267 (ILGGLIEITAAATLLVMAMTI).

It belongs to the CobS family. Mg(2+) is required as a cofactor.

Its subcellular location is the cell membrane. It catalyses the reaction alpha-ribazole + adenosylcob(III)inamide-GDP = adenosylcob(III)alamin + GMP + H(+). It carries out the reaction alpha-ribazole 5'-phosphate + adenosylcob(III)inamide-GDP = adenosylcob(III)alamin 5'-phosphate + GMP + H(+). It participates in cofactor biosynthesis; adenosylcobalamin biosynthesis; adenosylcobalamin from cob(II)yrinate a,c-diamide: step 7/7. Its function is as follows. Joins adenosylcobinamide-GDP and alpha-ribazole to generate adenosylcobalamin (Ado-cobalamin). Also synthesizes adenosylcobalamin 5'-phosphate from adenosylcobinamide-GDP and alpha-ribazole 5'-phosphate. The chain is Adenosylcobinamide-GDP ribazoletransferase from Frankia casuarinae (strain DSM 45818 / CECT 9043 / HFP020203 / CcI3).